The primary structure comprises 363 residues: Alanine racemase (363 aa).

Lysine 34 functions as the Proton acceptor; specific for D-alanine in the catalytic mechanism. The residue at position 34 (lysine 34) is an N6-(pyridoxal phosphate)lysine. Arginine 129 is a binding site for substrate. The active-site Proton acceptor; specific for L-alanine is the tyrosine 256. Methionine 304 is a binding site for substrate.

The protein belongs to the alanine racemase family. It depends on pyridoxal 5'-phosphate as a cofactor.

The catalysed reaction is L-alanine = D-alanine. The protein operates within amino-acid biosynthesis; D-alanine biosynthesis; D-alanine from L-alanine: step 1/1. Catalyzes the interconversion of L-alanine and D-alanine. May also act on other amino acids. In Edwardsiella ictaluri (strain 93-146), this protein is Alanine racemase (alr).